We begin with the raw amino-acid sequence, 71 residues long: MVNVKKGVLVTSDPAFRQLLIHLDDSRQLGSKFIVRELDDTHLFIEKEIVPMLENKVEQIMENMNPEAVDK.

It belongs to the TFB5 family. As to quaternary structure, component of the 7-subunit TFIIH core complex.

Its subcellular location is the nucleus. The protein localises to the chromosome. In terms of biological role, component of the general transcription and DNA repair factor IIH (TFIIH) core complex, which is involved in general and transcription-coupled nucleotide excision repair (NER) of damaged DNA and in RNA transcription by RNA polymerase II. In NER, TFIIH acts by opening DNA around the lesion to allow the excision of the damaged oligonucleotide and its replacement by a new DNA fragment. In transcription, TFIIH has an essential role in transcription initiation. When the pre-initiation complex (PIC) has been established, TFIIH is required for promoter opening and promoter escape. Necessary for the stability of the TFIIH complex and for the presence of normal levels of TFIIH in the cell. Required for efficient binding of TFIIH to damaged DNA. Dispensable for normal development, but required when transcription is challenged. The protein is General transcription and DNA repair factor IIH subunit TFB5 of Caenorhabditis elegans.